The chain runs to 383 residues: Transcription factor Sox-17-alpha (383 aa).

2 disordered regions span residues 1–20 (MSSP…KCSV) and 37–58 (NSLG…GKAE). Positions 61–129 (IRRPMNAFMV…QHMQDHPNYK (69 aa)) form a DNA-binding region, HMG box. The Sox C-terminal domain occupies 267 to 382 (GSPVQGMMGC…TAVYYCNYPS (116 aa)). The 9aaTAD signature appears at 331–339 (TEFEQYLSY). Positions 332-337 (EFEQYL) are required for transcriptional activity and interaction with ctnnb1.

Interacts (via C-terminus) with ctnnb1/beta-catenin (via Armadillo repeats); this interaction is required for inhibition of wnt-signaling. Expressed throughout the deep and superficial endoderm during gastrulation. During neural and early tail bud stages, expression declines significantly in the anterior endoderm, except in the endoderm behind the cement gland. Strong expression persists in the endoderm posterior to the liver diverticulum until late tail bud stage. By late tailbud, expression is undetectable in most of the endoderm but is maintained in the presumptive gall bladder region and the extreme posterior region. In addition, expressed in endothelial cells in the head and along the flank of the embryo.

The protein localises to the nucleus. Functionally, transcription activator. Binds to the DNA sequence 5'-AACAAT-3'. All of the sox17 proteins are required for embryonic endoderm development and gastrulation movements, and show some redundancy in function. In addition, the sox17 proteins have distinct but overlapping roles in later gut development. Acts downstream of vegt-signaling in endoderm differentiation to induce a range of endodermal genes both directly (including endodermin and dhh/chh) and indirectly. Also represses wnt-responsive genes to inhibit wnt/beta-catenin signaling. The polypeptide is Transcription factor Sox-17-alpha (sox17a) (Xenopus tropicalis (Western clawed frog)).